A 148-amino-acid polypeptide reads, in one-letter code: Snaclec stejaggregin-A subunit beta-2 (148 aa).

A signal peptide spans 1–23; it reads MGQFIFVSFGLLVVLLSLSGAGA. Cys27 and Cys38 are joined by a disulfide. The 112-residue stretch at 34 to 145 folds into the C-type lectin domain; it reads YDLYCYKVFK…CSRTHYVVCK (112 aa). Residues Asn47 and Asn78 are each glycosylated (N-linked (GlcNAc...) asparagine). 2 disulfide bridges follow: Cys55-Cys144 and Cys121-Cys136.

Belongs to the snaclec family. Heteromultimer; disulfide-linked. Expressed by the venom gland.

The protein resides in the secreted. Interferes with one step of hemostasis (modulation of platelet aggregation, or coagulation cascade, for example). The sequence is that of Snaclec stejaggregin-A subunit beta-2 from Trimeresurus stejnegeri (Chinese green tree viper).